A 299-amino-acid chain; its full sequence is Coenzyme PQQ synthesis protein B (299 aa).

Belongs to the PqqB family.

Its pathway is cofactor biosynthesis; pyrroloquinoline quinone biosynthesis. Functionally, may be involved in the transport of PQQ or its precursor to the periplasm. The protein is Coenzyme PQQ synthesis protein B of Xanthomonas axonopodis pv. citri (strain 306).